The following is a 436-amino-acid chain: MKVLVVGTGAREHAIADALKDDVELYCYMSKVNPGISKIAEFAQGDEGEIEKVAKFAVDNNIDIAFIGPEAPLGKGIVDELEKNGISCVGPSQSAARIETDKSFMRKLFEDYDIEGSLVYKVFDNYDDVSAFLDDFDRDVVVKPVGLTGGKGVKIVGDHLKDNQEAKEYSKEVIDNAMGGFTQVIIEERLIGEEFTIQAFCDGTHLAPMPAAQDHPHAFEGDVGAITGGMGSYSDKGGLLPFLSQDDYDEAVKIMEATLKAIAKEAEPYKGILYGQFMLTADGPKLIEYNARFGDPEAMNVLPLLKTPLADVCQAIVDGNLDKVEFNDKASVCKYIVPDGYPETSHAGETIEVDEKTIEDLGAKVFYAAVGLEDDEIHLSGSRALGIVASGDSIEEAEKIAEKACACIKGNVYHRSDVGTTDLVNKRVEHMKEILN.

Residues 106-318 form the ATP-grasp domain; the sequence is RKLFEDYDIE…LADVCQAIVD (213 aa). ATP is bound at residue 133–196; it reads LDDFDRDVVV…EERLIGEEFT (64 aa). Positions 276, 288, and 290 each coordinate Mg(2+). Residues glutamine 276, glutamate 288, and asparagine 290 each contribute to the Mn(2+) site.

It belongs to the GARS family. Mg(2+) serves as cofactor. It depends on Mn(2+) as a cofactor.

It carries out the reaction 5-phospho-beta-D-ribosylamine + glycine + ATP = N(1)-(5-phospho-beta-D-ribosyl)glycinamide + ADP + phosphate + H(+). The protein operates within purine metabolism; IMP biosynthesis via de novo pathway; N(1)-(5-phospho-D-ribosyl)glycinamide from 5-phospho-alpha-D-ribose 1-diphosphate: step 2/2. This Methanobrevibacter smithii (strain ATCC 35061 / DSM 861 / OCM 144 / PS) protein is Phosphoribosylamine--glycine ligase.